The sequence spans 287 residues: 4-hydroxybenzoate octaprenyltransferase (287 aa).

Helical transmembrane passes span 7 to 27, 30 to 50, 94 to 114, 118 to 138, 142 to 162, 167 to 187, 209 to 229, 235 to 255, and 266 to 286; these read FISY…LLLW, LWAL…LIFV, VAVA…LNAF, LSVL…FFAM, VLGI…LDFI, WFLF…YAMV, VVVI…VAQL, YFLV…KLVS, and FRHN…GLGV.

The protein belongs to the UbiA prenyltransferase family. Mg(2+) is required as a cofactor.

It is found in the cell inner membrane. The enzyme catalyses all-trans-octaprenyl diphosphate + 4-hydroxybenzoate = 4-hydroxy-3-(all-trans-octaprenyl)benzoate + diphosphate. It functions in the pathway cofactor biosynthesis; ubiquinone biosynthesis. In terms of biological role, catalyzes the prenylation of para-hydroxybenzoate (PHB) with an all-trans polyprenyl group. Mediates the second step in the final reaction sequence of ubiquinone-8 (UQ-8) biosynthesis, which is the condensation of the polyisoprenoid side chain with PHB, generating the first membrane-bound Q intermediate 3-octaprenyl-4-hydroxybenzoate. The chain is 4-hydroxybenzoate octaprenyltransferase from Polynucleobacter necessarius subsp. necessarius (strain STIR1).